A 490-amino-acid polypeptide reads, in one-letter code: Myocilin (490 aa).

The first 18 residues, methionine 1–alanine 18, serve as a signal peptide directing secretion. A coiled-coil region spans residues glycine 51 to glutamine 170. Residues leucine 152 to arginine 186 are disordered. Residues glutamine 173 to proline 182 are compositionally biased toward polar residues. Residues glycine 230–arginine 489 enclose the Olfactomedin-like domain. A disulfide bridge links cysteine 231 with cysteine 419. Ca(2+) contacts are provided by aspartate 366, asparagine 414, alanine 415, isoleucine 463, and aspartate 464. Positions serine 488–leucine 490 match the Microbody targeting signal motif.

In terms of assembly, homodimer (via N-terminus). Can also form higher oligomers. Interacts with OLFM3, FN1, NRCAM, GLDN and NFASC. Interacts (via N-terminus) with MYL2. Interacts with SFRP1, FRZB, FZD7, FZD10, FZD1 and WIF1; regulates Wnt signaling. Interacts with SNTA1; regulates muscle hypertrophy. Interacts with ERBB2 and ERBB3; activates ERBB2-ERBB3 signaling pathway. Interacts with SNCG; affects its secretion and its aggregation. Palmitoylated. Post-translationally, undergoes a calcium-dependent proteolytic cleavage at Gln-212 by CAPN2 in the endoplasmic reticulum. The result is the production of two fragments, one of 35 kDa containing the C-terminal olfactomedin-like domain, and another of 20 kDa containing the N-terminal leucine zipper-like domain. In terms of processing, glycosylated. In terms of tissue distribution, the myocilin 35 kDa fragment is detected in iris and ciliary body.

Its subcellular location is the secreted. It localises to the golgi apparatus. It is found in the cytoplasmic vesicle. The protein resides in the extracellular space. The protein localises to the extracellular matrix. Its subcellular location is the extracellular exosome. It localises to the mitochondrion. It is found in the mitochondrion intermembrane space. The protein resides in the mitochondrion inner membrane. The protein localises to the mitochondrion outer membrane. Its subcellular location is the rough endoplasmic reticulum. It localises to the cell projection. It is found in the cilium. The protein resides in the endoplasmic reticulum. In terms of biological role, secreted glycoprotein regulating the activation of different signaling pathways in adjacent cells to control different processes including cell adhesion, cell-matrix adhesion, cytoskeleton organization and cell migration. Promotes substrate adhesion, spreading and formation of focal contacts. Negatively regulates cell-matrix adhesion and stress fiber assembly through Rho protein signal transduction. Modulates the organization of actin cytoskeleton by stimulating the formation of stress fibers through interactions with components of Wnt signaling pathways. Promotes cell migration through activation of PTK2 and the downstream phosphatidylinositol 3-kinase signaling. Plays a role in bone formation and promotes osteoblast differentiation in a dose-dependent manner through mitogen-activated protein kinase signaling. Mediates myelination in the peripheral nervous system through ERBB2/ERBB3 signaling. Plays a role as a regulator of muscle hypertrophy through the components of dystrophin-associated protein complex. Involved in positive regulation of mitochondrial depolarization. Plays a role in neurite outgrowth. May participate in the obstruction of fluid outflow in the trabecular meshwork. In Bos taurus (Bovine), this protein is Myocilin (MYOC).